The following is a 2448-amino-acid chain: Cysteine repeat modular protein 1 (2448 aa).

A helical membrane pass occupies residues Thr9 to Cys29. Asn48, Asn89, Asn248, Asn284, Asn461, Asn503, Asn542, Asn598, and Asn619 each carry an N-linked (GlcNAc...) asparagine glycan. FU repeat units follow at residues Lys431–Phe481, Phe485–Ile530, Asn535–Ser566, and Ser567–Ala611. 10 FU repeats span residues Asn645–Pro694, Thr698–Gln727, Asp728–Gly772, Gln775–Asn813, Lys819–Ser868, Gly904–Asp947, Gln950–Ala983, Asn984–Pro1027, Gln1063–Val1109, and Gln1113–Leu1144. N-linked (GlcNAc...) asparagine glycans are attached at residues Asn761 and Asn812. N-linked (GlcNAc...) asparagine glycosylation is present at Asn934. Asn1002 is a glycosylation site (N-linked (GlcNAc...) asparagine). An N-linked (GlcNAc...) asparagine glycan is attached at Asn1146. One copy of the FU 15 repeat lies at Gln1147–Leu1193. Asn1194 carries N-linked (GlcNAc...) asparagine glycosylation. FU repeat units lie at residues Asn1197–Gln1232, Gly1234–Ser1279, Lys1281–Gln1332, Ser1346–Leu1394, and Asn1402–Gln1436. Asn1296, Asn1328, and Asn1365 each carry an N-linked (GlcNAc...) asparagine glycan. Residues Asn1506, Asn1601, Asn1628, and Asn1670 are each glycosylated (N-linked (GlcNAc...) asparagine). Positions Ser1739–Gln1773 constitute an EGF-like domain. 3 disulfides stabilise this stretch: Cys1743/Cys1754, Cys1748/Cys1761, and Cys1763/Cys1772. 7 N-linked (GlcNAc...) asparagine glycosylation sites follow: Asn1800, Asn1849, Asn1877, Asn1942, Asn2117, Asn2155, and Asn2179. 2 consecutive transmembrane segments (helical) span residues Leu2201–Ile2221 and Ile2238–Val2258. An N-linked (GlcNAc...) asparagine glycan is attached at Asn2260. Transmembrane regions (helical) follow at residues Ser2267 to Phe2287, Ile2296 to Val2316, Met2352 to Cys2372, and Ala2386 to Gly2406.

It localises to the membrane. Required for mucocyst secretion. In Tetrahymena thermophila (strain SB210), this protein is Cysteine repeat modular protein 1.